The primary structure comprises 371 residues: 4-hydroxy-3-methylbut-2-en-1-yl diphosphate synthase (flavodoxin) (371 aa).

Residues Cys269, Cys272, Cys304, and Glu311 each coordinate [4Fe-4S] cluster.

This sequence belongs to the IspG family. The cofactor is [4Fe-4S] cluster.

The catalysed reaction is (2E)-4-hydroxy-3-methylbut-2-enyl diphosphate + oxidized [flavodoxin] + H2O + 2 H(+) = 2-C-methyl-D-erythritol 2,4-cyclic diphosphate + reduced [flavodoxin]. It participates in isoprenoid biosynthesis; isopentenyl diphosphate biosynthesis via DXP pathway; isopentenyl diphosphate from 1-deoxy-D-xylulose 5-phosphate: step 5/6. Functionally, converts 2C-methyl-D-erythritol 2,4-cyclodiphosphate (ME-2,4cPP) into 1-hydroxy-2-methyl-2-(E)-butenyl 4-diphosphate. In Acinetobacter baylyi (strain ATCC 33305 / BD413 / ADP1), this protein is 4-hydroxy-3-methylbut-2-en-1-yl diphosphate synthase (flavodoxin).